The following is a 319-amino-acid chain: tRNA-cytidine(32) 2-sulfurtransferase (319 aa).

The PP-loop motif signature appears at 43 to 48 (SGGKDS). Residues Cys-118, Cys-121, and Cys-209 each contribute to the [4Fe-4S] cluster site.

It belongs to the TtcA family. Homodimer. It depends on Mg(2+) as a cofactor. The cofactor is [4Fe-4S] cluster.

The protein localises to the cytoplasm. It catalyses the reaction cytidine(32) in tRNA + S-sulfanyl-L-cysteinyl-[cysteine desulfurase] + AH2 + ATP = 2-thiocytidine(32) in tRNA + L-cysteinyl-[cysteine desulfurase] + A + AMP + diphosphate + H(+). The protein operates within tRNA modification. Catalyzes the ATP-dependent 2-thiolation of cytidine in position 32 of tRNA, to form 2-thiocytidine (s(2)C32). The sulfur atoms are provided by the cysteine/cysteine desulfurase (IscS) system. The chain is tRNA-cytidine(32) 2-sulfurtransferase from Neisseria meningitidis serogroup C / serotype 2a (strain ATCC 700532 / DSM 15464 / FAM18).